A 972-amino-acid chain; its full sequence is mRNA transport regulator MTR10 (972 aa).

Its subcellular location is the nucleus. Involved in mRNA transport from nucleus to cytoplasm. The chain is mRNA transport regulator MTR10 (MTR10) from Saccharomyces cerevisiae (strain ATCC 204508 / S288c) (Baker's yeast).